We begin with the raw amino-acid sequence, 448 residues long: Glutamyl-tRNA reductase (448 aa).

Residues T49–R52, S109, E114–Q116, and Q120 contribute to the substrate site. Catalysis depends on C50, which acts as the Nucleophile. G189–G194 is an NADP(+) binding site.

It belongs to the glutamyl-tRNA reductase family. As to quaternary structure, homodimer.

The enzyme catalyses (S)-4-amino-5-oxopentanoate + tRNA(Glu) + NADP(+) = L-glutamyl-tRNA(Glu) + NADPH + H(+). Its pathway is porphyrin-containing compound metabolism; protoporphyrin-IX biosynthesis; 5-aminolevulinate from L-glutamyl-tRNA(Glu): step 1/2. Its function is as follows. Catalyzes the NADPH-dependent reduction of glutamyl-tRNA(Glu) to glutamate 1-semialdehyde (GSA). The polypeptide is Glutamyl-tRNA reductase (Staphylococcus epidermidis (strain ATCC 35984 / DSM 28319 / BCRC 17069 / CCUG 31568 / BM 3577 / RP62A)).